Here is a 253-residue protein sequence, read N- to C-terminus: Protein PET20, mitochondrial (253 aa).

A mitochondrion-targeting transit peptide spans 1 to 36 (MLKLARPFIPPLSRNNAISSGIVLTSRRFQSSFTFL). Residues 44 to 93 (KNQMKSKRKKGSKKAAYHRQPPEHEHTAPLIKQNKTITKKEHSDVRGSHL) are disordered. The segment covering 47–60 (MKSKRKKGSKKAAY) has biased composition (basic residues). Residues 81–90 (TKKEHSDVRG) show a composition bias toward basic and acidic residues.

It is found in the mitochondrion. Required for respiratory growth, stability of the mitochondrial genome and for proper assembly or maintenance of mitochondrial proteins. This chain is Protein PET20, mitochondrial (PET20), found in Saccharomyces cerevisiae (strain ATCC 204508 / S288c) (Baker's yeast).